The primary structure comprises 150 residues: Allograft inflammatory factor 1-like (150 aa).

Ser-2 is subject to N-acetylserine. Ser-2 is modified (phosphoserine). In terms of domain architecture, EF-hand 1 spans 47–82 (EKLTAFKEKYMEFDLNNEGEIDLMSLKRMMEKLGVP). Asp-60, Asn-62, Glu-64, and Glu-66 together coordinate Ca(2+). The EF-hand 2; degenerate domain maps to 83–117 (KTHLEMKKMISEVTGGVSDTISYRDFVNMMLGKRS). The disordered stretch occupies residues 129 to 150 (KANESSPKPVGPPPERDIASLP). Ser-134 is modified (phosphoserine).

As to quaternary structure, homodimer (Potential). Monomer.

It is found in the cytoplasm. It localises to the cytoskeleton. The protein localises to the cell projection. Its subcellular location is the ruffle membrane. Its function is as follows. Actin-binding protein that promotes actin bundling. May neither bind calcium nor depend on calcium for function. In Homo sapiens (Human), this protein is Allograft inflammatory factor 1-like (AIF1L).